Here is a 90-residue protein sequence, read N- to C-terminus: Small ribosomal subunit protein bS16 (90 aa).

It belongs to the bacterial ribosomal protein bS16 family.

The sequence is that of Small ribosomal subunit protein bS16 from Listeria innocua serovar 6a (strain ATCC BAA-680 / CLIP 11262).